Reading from the N-terminus, the 295-residue chain is Bifunctional protein FolD (295 aa).

NADP(+) is bound by residues Gly166–Ser168, Ser191, and Ile232.

It belongs to the tetrahydrofolate dehydrogenase/cyclohydrolase family. As to quaternary structure, homodimer.

It catalyses the reaction (6R)-5,10-methylene-5,6,7,8-tetrahydrofolate + NADP(+) = (6R)-5,10-methenyltetrahydrofolate + NADPH. The catalysed reaction is (6R)-5,10-methenyltetrahydrofolate + H2O = (6R)-10-formyltetrahydrofolate + H(+). The protein operates within one-carbon metabolism; tetrahydrofolate interconversion. Catalyzes the oxidation of 5,10-methylenetetrahydrofolate to 5,10-methenyltetrahydrofolate and then the hydrolysis of 5,10-methenyltetrahydrofolate to 10-formyltetrahydrofolate. The polypeptide is Bifunctional protein FolD (Wolbachia sp. subsp. Brugia malayi (strain TRS)).